Here is a 181-residue protein sequence, read N- to C-terminus: Protein GrpE (181 aa).

Residues 1–12 (MENTQENPTTPS) are compositionally biased toward polar residues. Residues 1-33 (MENTQENPTTPSAEDIGSEKQAAQGAAPAAEAA) form a disordered region. Positions 21-33 (QAAQGAAPAAEAA) are enriched in low complexity.

This sequence belongs to the GrpE family. Homodimer.

Its subcellular location is the cytoplasm. Participates actively in the response to hyperosmotic and heat shock by preventing the aggregation of stress-denatured proteins, in association with DnaK and GrpE. It is the nucleotide exchange factor for DnaK and may function as a thermosensor. Unfolded proteins bind initially to DnaJ; upon interaction with the DnaJ-bound protein, DnaK hydrolyzes its bound ATP, resulting in the formation of a stable complex. GrpE releases ADP from DnaK; ATP binding to DnaK triggers the release of the substrate protein, thus completing the reaction cycle. Several rounds of ATP-dependent interactions between DnaJ, DnaK and GrpE are required for fully efficient folding. This is Protein GrpE from Burkholderia cenocepacia (strain HI2424).